The primary structure comprises 141 residues: NADPH-dependent 7-cyano-7-deazaguanine reductase (141 aa).

Cys-34 (thioimide intermediate) is an active-site residue. Asp-41 (proton donor) is an active-site residue. Substrate contacts are provided by residues 56-58 and 75-76; these read VEL and HE.

This sequence belongs to the GTP cyclohydrolase I family. QueF type 1 subfamily.

It localises to the cytoplasm. It catalyses the reaction 7-aminomethyl-7-carbaguanine + 2 NADP(+) = 7-cyano-7-deazaguanine + 2 NADPH + 3 H(+). Its pathway is tRNA modification; tRNA-queuosine biosynthesis. Its function is as follows. Catalyzes the NADPH-dependent reduction of 7-cyano-7-deazaguanine (preQ0) to 7-aminomethyl-7-deazaguanine (preQ1). In Acidithiobacillus ferrooxidans (strain ATCC 23270 / DSM 14882 / CIP 104768 / NCIMB 8455) (Ferrobacillus ferrooxidans (strain ATCC 23270)), this protein is NADPH-dependent 7-cyano-7-deazaguanine reductase.